We begin with the raw amino-acid sequence, 877 residues long: Probable sulfate permease C3H7.02 (877 aa).

Helical transmembrane passes span 133-153 (WLVY…PQGM), 161-181 (LPAQ…CIFA), 186-206 (VSIG…ANVQ), 221-241 (LALL…GFII), 243-263 (FIPV…IMAG), 292-312 (LPHT…LYLV), 329-349 (VFFL…TAIS), 384-404 (LCAD…LEHI), 424-444 (LIAM…PATG), 461-481 (LGGI…TGAF), 484-504 (IPNA…IIPW), 518-538 (ALIF…NGIY), and 543-563 (LSAA…LGIL). The region spanning 594–747 (NLTVRDPPAG…SRSIEVGSAA (154 aa)) is the STAS domain. 2 disordered regions span residues 643 to 663 (KASD…APEV) and 793 to 821 (ADSD…TFSH). Residues 801–821 (SDDKDKKVEGHRPSQDPTFSH) show a composition bias toward basic and acidic residues.

It belongs to the SLC26A/SulP transporter (TC 2.A.53) family.

Its subcellular location is the membrane. Functionally, high affinity uptake of sulfate into the cell. This Schizosaccharomyces pombe (strain 972 / ATCC 24843) (Fission yeast) protein is Probable sulfate permease C3H7.02.